Reading from the N-terminus, the 525-residue chain is DNA damage-binding protein CMR1 (525 aa).

2 disordered regions span residues 38–86 (AGIF…AESE) and 212–233 (GILDASQQPDQNESDEEDEYPD). The segment covering 53–62 (TKKKPAPKRV) has biased composition (basic residues). WD repeat units lie at residues 183 to 224 (ITRE…DQNE), 241 to 281 (PHTN…ATEA), 288 to 328 (SDDE…KANP), 339 to 379 (LSEK…TKHP), 384 to 425 (EHES…KDWK), 448 to 491 (GKWV…LAQL), and 494 to 525 (DVITAVPAVAVFHRTQNWVVGGTGSAKVCLWM). Positions 223-232 (NESDEEDEYP) are enriched in acidic residues.

It belongs to the WD repeat DDB2/WDR76 family.

Functionally, DNA-binding protein that binds to both single- and double-stranded DNA. Binds preferentially to UV-damaged DNA. May be involved in DNA-metabolic processes. This Coccidioides immitis (strain RS) (Valley fever fungus) protein is DNA damage-binding protein CMR1.